A 507-amino-acid chain; its full sequence is Chromosomal replication initiator protein DnaA (507 aa).

The interval 1 to 112 is domain I, interacts with DnaA modulators; sequence MTDDPGSGFT…PATDEADDTT (112 aa). A disordered region spans residues 99–162; the sequence is RIAPPATDEA…ERPRNTDSAT (64 aa). Polar residues predominate over residues 113 to 127; it reads VPPSENPATTSPDTT. The segment at 113-166 is domain II; it reads VPPSENPATTSPDTTTDNDEIDDSAAARGDNQHSWPSYFTERPRNTDSATAGVT. Residues 167 to 383 are domain III, AAA+ region; sequence SLNRRYTFDT…GALIRVTAFA (217 aa). 4 residues coordinate ATP: G211, G213, K214, and T215. The domain IV, binds dsDNA stretch occupies residues 384–507; it reads SLNKTPIDKA…TTRIRQRSKR (124 aa).

Belongs to the DnaA family. As to quaternary structure, oligomerizes as a right-handed, spiral filament on DNA at oriC.

It localises to the cytoplasm. Its function is as follows. Plays an essential role in the initiation and regulation of chromosomal replication. ATP-DnaA binds to the origin of replication (oriC) to initiate formation of the DNA replication initiation complex once per cell cycle. Binds the DnaA box (a 9 base pair repeat at the origin) and separates the double-stranded (ds)DNA. Forms a right-handed helical filament on oriC DNA; dsDNA binds to the exterior of the filament while single-stranded (ss)DNA is stabiized in the filament's interior. The ATP-DnaA-oriC complex binds and stabilizes one strand of the AT-rich DNA unwinding element (DUE), permitting loading of DNA polymerase. After initiation quickly degrades to an ADP-DnaA complex that is not apt for DNA replication. Binds acidic phospholipids. This Mycobacterium bovis (strain ATCC BAA-935 / AF2122/97) protein is Chromosomal replication initiator protein DnaA.